The sequence spans 412 residues: Subtilisin-like protease 6 (412 aa).

The first 20 residues, M1–G20, serve as a signal peptide directing secretion. Residues A21–L127 constitute a propeptide that is removed on maturation. Residues K36–A120 enclose the Inhibitor I9 domain. N-linked (GlcNAc...) asparagine glycans are attached at residues N123 and N126. A Peptidase S8 domain is found at S135 to K412. Active-site charge relay system residues include D167 and H198. 3 N-linked (GlcNAc...) asparagine glycosylation sites follow: N252, N264, and N325. S358 acts as the Charge relay system in catalysis. N408 carries an N-linked (GlcNAc...) asparagine glycan.

This sequence belongs to the peptidase S8 family.

Its subcellular location is the secreted. Functionally, secreted subtilisin-like serine protease with keratinolytic activity that contributes to pathogenicity. The chain is Subtilisin-like protease 6 (SUB6) from Trichophyton verrucosum (Cattle ringworm fungus).